Here is a 274-residue protein sequence, read N- to C-terminus: MAIHLYKTSTPSTRKGAVDRQVKSNPRNNLIYGQHRCGKGRNARGIITAGHRGGGHKRLYRKIDFRRNEKDIYGKIVTIEYDPNRNAYICLIHYGGGEKRYILHPRGALIGDTIVSGTEVPIKMGNALPLTDMPLGTAIHNIEITLGKGGQLARAAGAVAKLIAKEGKSATLKLPSGEVRLIPKNCSATVGQVGNVGVNQKSLGRAGSKCWLGKRPVVRGVVMNPVDHPHGGGEGRAPIGRKKPATPWGYPALGRRSRKRNKYSDNLILRRRSK.

The disordered stretch occupies residues N224 to K274.

It belongs to the universal ribosomal protein uL2 family. In terms of assembly, part of the 50S ribosomal subunit.

The protein resides in the plastid. The protein localises to the chloroplast. In Morus indica (Mulberry), this protein is Large ribosomal subunit protein uL2cz/uL2cy (rpl2-A).